Here is a 1720-residue protein sequence, read N- to C-terminus: 182 kDa tankyrase-1-binding protein (1720 aa).

Positions 1 to 137 (MKGSTLREGT…PPLTPPARCA (137 aa)) are disordered. A Phosphoserine modification is found at S14. The segment covering 117–127 (SGKEDAGKEDL) has biased composition (basic and acidic residues). Phosphothreonine is present on T131. Residues S178 and S220 each carry the phosphoserine modification. 2 disordered regions span residues 185–472 (SRLT…ESNW) and 485–595 (RPSG…EDQE). The tract at residues 209-1563 (EEDSKSPAKG…TEILDSAMYR (1355 aa)) is acidic. Residues 232–243 (QEEHSKTPEERN) show a composition bias toward basic and acidic residues. Phosphothreonine is present on T238. Polar residues predominate over residues 266–287 (VSKTWVTSSADPVSEHGGSTSA). Phosphoserine is present on residues S286 and S300. Residues 296–316 (PASESPRLSSRPSSPCHSQLS) are compositionally biased toward low complexity. Residues 317-327 (ETQSPAASEAS) are compositionally biased toward polar residues. 2 positions are modified to phosphoserine: S429 and S437. Residues 449–459 (TLPQGQGSQSA) are compositionally biased toward polar residues. A phosphoserine mark is found at S496 and S500. Low complexity predominate over residues 502–518 (ITEASEAAEAAEADSWA). T503 and T533 each carry phosphothreonine. 6 positions are modified to phosphoserine: S539, S568, S602, S673, S692, and S713. Disordered regions lie at residues 659-720 (TTLP…CSEG), 734-924 (GVAT…EFEK), and 955-1081 (SGGG…GWAG). The segment covering 742–758 (SSFGSSSWSQDTSQNYS) has biased composition (low complexity). Phosphoserine occurs at positions 763, 796, 807, 845, 866, 871, 876, 887, 912, 976, 980, 1006, 1017, and 1022. The segment covering 840 to 866 (FGKRESQDPHSIHDKELQDQEFGKRDS) has biased composition (basic and acidic residues). Basic and acidic residues predominate over residues 991–1014 (FEKKTPVGEDRFCEASRDVGHLEE). The segment covering 1027–1039 (HSRDGAARPKDEG) has biased composition (basic and acidic residues). Phosphoserine occurs at positions 1047, 1063, 1084, 1096, 1126, 1131, 1171, 1212, 1241, and 1246. Residues 1128–1153 (AGLSPSRKSGGGHFVPPGETKAGAVD) are disordered. The tract at residues 1198-1255 (LARRLGTGESEEPRSLGVGEKDWTSSVEARNRDLPGQAEVGRHSQARESGVGEPDWSG) is disordered. A compositionally biased stretch (basic and acidic residues) spans 1208 to 1230 (EEPRSLGVGEKDWTSSVEARNRD). Phosphothreonine is present on T1275. 5 positions are modified to phosphoserine: S1290, S1321, S1324, S1373, and S1375. Residues 1358 to 1546 (GRVGPDLELD…RGLLPSCPSE (189 aa)) form a disordered region. Positions 1402-1411 (EDSSSPSFET) are enriched in polar residues. Phosphoserine occurs at positions 1425, 1429, 1437, 1440, 1442, 1463, and 1466. The span at 1428–1457 (ASPSSCLTRSPPSGSQSLLEGIMTASSSKG) shows a compositional bias: polar residues. Positions 1440–1532 (SGSQSLLEGI…QNEQASAPPP (93 aa)) are tankyrase-binding. Residues 1477–1489 (LAAGAGQGEPQEP) are compositionally biased toward low complexity. S1496 carries the post-translational modification Phosphoserine. Over residues 1515–1527 (WSLTGAARQNEQA) the composition is skewed to polar residues. A Phosphoserine modification is found at S1549. Residue T1554 is modified to Phosphothreonine. The tract at residues 1567-1720 (NLGRKRGHRA…QALKLKKKKI (154 aa)) is disordered. The segment covering 1568 to 1577 (LGRKRGHRAP) has biased composition (basic residues). The span at 1593–1606 (SDTRLFQDSTEPRA) shows a compositional bias: basic and acidic residues. 3 positions are modified to phosphoserine: S1611, S1612, and S1622. The Nuclear localization signal signature appears at 1620–1626 (PQSRRTR). K1635 carries the post-translational modification N6-methyllysine. 2 positions are modified to phosphoserine: S1643 and S1657. Residues 1656-1670 (RSAEEGEVTESKSSQ) are compositionally biased toward basic and acidic residues. Residues 1671 to 1690 (KESSVQRSKSCKVPGLGKPL) show a composition bias toward low complexity. S1706 carries the phosphoserine modification. A Nuclear localization signal motif is present at residues 1714-1719 (KLKKKK).

In terms of assembly, binds to the ANK repeat domain of TNKS1 and TNKS2. In terms of processing, ADP-ribosylated by TNKS1.

The protein localises to the nucleus. It localises to the cytoplasm. The protein resides in the cytoskeleton. It is found in the chromosome. The sequence is that of 182 kDa tankyrase-1-binding protein (Tnks1bp1) from Mus musculus (Mouse).